The chain runs to 377 residues: Protein RecA (377 aa).

ATP is bound at residue 82–89 (GPESSGKT). The tract at residues 345 to 377 (EGSEVSANSMRPLASAARQASSRPNLSQVSANG) is disordered. The segment covering 362-377 (RQASSRPNLSQVSANG) has biased composition (polar residues).

Belongs to the RecA family.

Its subcellular location is the cytoplasm. Its function is as follows. Can catalyze the hydrolysis of ATP in the presence of single-stranded DNA, the ATP-dependent uptake of single-stranded DNA by duplex DNA, and the ATP-dependent hybridization of homologous single-stranded DNAs. It interacts with LexA causing its activation and leading to its autocatalytic cleavage. This chain is Protein RecA, found in Prochlorococcus marinus (strain NATL2A).